Consider the following 1144-residue polypeptide: Probable translation initiation factor IF-2 (1144 aa).

The DOD-type homing endonuclease domain maps to 232 to 362; sequence FAGVMFGDGS…LSLLLLRFGI (131 aa). Residues 551–768 enclose the tr-type G domain; it reads TTETHNFVAN…LIAGLSQKYL (218 aa). GTP contacts are provided by residues 624-628 and 678-681; these read DTPGH and NKID.

It belongs to the TRAFAC class translation factor GTPase superfamily. Classic translation factor GTPase family. IF-2 subfamily. This protein undergoes a protein self splicing that involves a post-translational excision of the intervening region (intein) followed by peptide ligation.

Function in general translation initiation by promoting the binding of the formylmethionine-tRNA to ribosomes. Seems to function along with eIF-2. The polypeptide is Probable translation initiation factor IF-2 (infB) (Thermococcus kodakarensis (strain ATCC BAA-918 / JCM 12380 / KOD1) (Pyrococcus kodakaraensis (strain KOD1))).